Here is a 451-residue protein sequence, read N- to C-terminus: BAHD acyltransferase At3g29680 (451 aa).

Catalysis depends on proton acceptor residues H161 and D393.

It belongs to the plant acyltransferase family.

The protein is BAHD acyltransferase At3g29680 of Arabidopsis thaliana (Mouse-ear cress).